Here is a 169-residue protein sequence, read N- to C-terminus: Flagellar biosynthetic protein FliU (169 aa).

Belongs to the FliB family.

Its function is as follows. Required for the secretion of flagellin and expression of motility. The chain is Flagellar biosynthetic protein FliU (fliU) from Salmonella muenchen.